Here is a 282-residue protein sequence, read N- to C-terminus: Pantothenate synthetase (282 aa).

30-37 is a binding site for ATP; that stretch reads MGALHRGH. His-37 serves as the catalytic Proton donor. Gln-61 provides a ligand contact to (R)-pantoate. Gln-61 is a beta-alanine binding site. 147-150 serves as a coordination point for ATP; it reads GEKD. Gln-153 lines the (R)-pantoate pocket. ATP is bound at residue 184–187; that stretch reads LSSR.

Belongs to the pantothenate synthetase family. As to quaternary structure, homodimer.

It localises to the cytoplasm. It carries out the reaction (R)-pantoate + beta-alanine + ATP = (R)-pantothenate + AMP + diphosphate + H(+). It participates in cofactor biosynthesis; (R)-pantothenate biosynthesis; (R)-pantothenate from (R)-pantoate and beta-alanine: step 1/1. Catalyzes the condensation of pantoate with beta-alanine in an ATP-dependent reaction via a pantoyl-adenylate intermediate. In Rhizorhabdus wittichii (strain DSM 6014 / CCUG 31198 / JCM 15750 / NBRC 105917 / EY 4224 / RW1) (Sphingomonas wittichii), this protein is Pantothenate synthetase.